The following is a 327-amino-acid chain: MAAYDSLMVFTGTANPELAQNVVKHLDISLGRADVGKFSDGEVAVELLENVRGRDVFILQSTCAPTNDNLMEILTMADALKRASAGRITAAIPYFGYARQDRRPRSARVPISAKLVANMLTSAGIDRVLTVDLHADQIQGFFDIPVDNVYATPVLLKDIRAQRFDDLIVVSPDVGGVVRARAVAKALNTDLAIIDKRRPKANVAEVMNIIGDVSGRTCLIVDDMIDTANTLCKAASALKERGAERVLAYATHAIFSGQAVDRIKNSDIDMVVVTDTIPLTAAAKACPNIRVASIAGLLAETLRRINNEESVSYLFNEELVATGACLP.

ATP-binding positions include Asp40–Glu42 and Arg99–Gln100. His134 and Asp173 together coordinate Mg(2+). Residue Lys196 is part of the active site. D-ribose 5-phosphate contacts are provided by residues Arg198, Asp222, and Asp226–Thr230.

This sequence belongs to the ribose-phosphate pyrophosphokinase family. Class I subfamily. In terms of assembly, homohexamer. The cofactor is Mg(2+).

It localises to the cytoplasm. The enzyme catalyses D-ribose 5-phosphate + ATP = 5-phospho-alpha-D-ribose 1-diphosphate + AMP + H(+). It functions in the pathway metabolic intermediate biosynthesis; 5-phospho-alpha-D-ribose 1-diphosphate biosynthesis; 5-phospho-alpha-D-ribose 1-diphosphate from D-ribose 5-phosphate (route I): step 1/1. Functionally, involved in the biosynthesis of the central metabolite phospho-alpha-D-ribosyl-1-pyrophosphate (PRPP) via the transfer of pyrophosphoryl group from ATP to 1-hydroxyl of ribose-5-phosphate (Rib-5-P). This chain is Ribose-phosphate pyrophosphokinase, found in Chromobacterium violaceum (strain ATCC 12472 / DSM 30191 / JCM 1249 / CCUG 213 / NBRC 12614 / NCIMB 9131 / NCTC 9757 / MK).